Reading from the N-terminus, the 195-residue chain is Phosphoheptose isomerase (195 aa).

One can recognise an SIS domain in the interval 37 to 195 (ISDSFKQHGK…IEFEMAKIRQ (159 aa)). 52–54 (NGG) lines the substrate pocket. Zn(2+)-binding residues include H61 and E65. Residues E65, 93-94 (ND), 119-121 (STS), S124, and Q172 each bind substrate. Residues Q172 and H180 each coordinate Zn(2+).

This sequence belongs to the SIS family. GmhA subfamily. In terms of assembly, homotetramer. Zn(2+) is required as a cofactor.

The protein localises to the cytoplasm. The catalysed reaction is 2 D-sedoheptulose 7-phosphate = D-glycero-alpha-D-manno-heptose 7-phosphate + D-glycero-beta-D-manno-heptose 7-phosphate. The protein operates within carbohydrate biosynthesis; D-glycero-D-manno-heptose 7-phosphate biosynthesis; D-glycero-alpha-D-manno-heptose 7-phosphate and D-glycero-beta-D-manno-heptose 7-phosphate from sedoheptulose 7-phosphate: step 1/1. Its function is as follows. Catalyzes the isomerization of sedoheptulose 7-phosphate in D-glycero-D-manno-heptose 7-phosphate. The protein is Phosphoheptose isomerase of Histophilus somni (strain 2336) (Haemophilus somnus).